Reading from the N-terminus, the 309-residue chain is Ornithine carbamoyltransferase (309 aa).

Residues 56–59 (STRT), Q83, R107, and 134–137 (HPCQ) contribute to the carbamoyl phosphate site. Residues N165, D223, and 227 to 228 (SM) contribute to the L-ornithine site. Carbamoyl phosphate is bound by residues 263–264 (CL) and R291.

The protein belongs to the aspartate/ornithine carbamoyltransferase superfamily. OTCase family.

The protein localises to the cytoplasm. It carries out the reaction carbamoyl phosphate + L-ornithine = L-citrulline + phosphate + H(+). It functions in the pathway amino-acid biosynthesis; L-arginine biosynthesis; L-arginine from L-ornithine and carbamoyl phosphate: step 1/3. Functionally, reversibly catalyzes the transfer of the carbamoyl group from carbamoyl phosphate (CP) to the N(epsilon) atom of ornithine (ORN) to produce L-citrulline. The sequence is that of Ornithine carbamoyltransferase from Burkholderia cenocepacia (strain HI2424).